A 317-amino-acid chain; its full sequence is uncharacterized protein (317 aa).

A compositionally biased stretch (basic and acidic residues) spans 1–11 (MASAGAERRPG). The disordered stretch occupies residues 1–164 (MASAGAERRP…KAKKRKSLGA (164 aa)). Residues 19-34 (GQGQLTEEPGSAQTSE) are compositionally biased toward polar residues. Basic and acidic residues-rich tracts occupy residues 47-58 (HEARGTQSEDQR) and 71-92 (EGPK…ERGP). Composition is skewed to basic residues over residues 100-110 (RPRHGPKRKPV) and 151-161 (KQHKKAKKRKS).

This is an uncharacterized protein from Homo sapiens (Human).